A 379-amino-acid polypeptide reads, in one-letter code: 3-isopropylmalate dehydrogenase 1 (379 aa).

Substrate-binding residues include R101, R111, R139, and D230. Positions 230, 254, and 258 each coordinate Mg(2+). 293-305 serves as a coordination point for NAD(+); sequence GSAPDIAGKGIAN.

This sequence belongs to the isocitrate and isopropylmalate dehydrogenases family. LeuB type 1 subfamily. Homodimer. Requires Mg(2+) as cofactor. It depends on Mn(2+) as a cofactor.

The protein resides in the cytoplasm. The enzyme catalyses (2R,3S)-3-isopropylmalate + NAD(+) = 4-methyl-2-oxopentanoate + CO2 + NADH. The protein operates within amino-acid biosynthesis; L-leucine biosynthesis; L-leucine from 3-methyl-2-oxobutanoate: step 3/4. In terms of biological role, catalyzes the oxidation of 3-carboxy-2-hydroxy-4-methylpentanoate (3-isopropylmalate) to 3-carboxy-4-methyl-2-oxopentanoate. The product decarboxylates to 4-methyl-2 oxopentanoate. The sequence is that of 3-isopropylmalate dehydrogenase 1 from Bradyrhizobium diazoefficiens (strain JCM 10833 / BCRC 13528 / IAM 13628 / NBRC 14792 / USDA 110).